The chain runs to 132 residues: Transcriptional repressor SmtB homolog (132 aa).

Zn(2+) is bound by residues Cys-20, His-26, Cys-71, Cys-73, Asp-114, His-116, His-127, and Glu-130. Positions 38-132 (MSLDQAQQMA…EVADHLQESD (95 aa)) constitute an HTH arsR-type domain. Residues 72-91 (VCDLAAAMKVSESAVSHQLR) constitute a DNA-binding region (H-T-H motif).

Homodimer.

Transcriptional repressor of the expression of the ziaA gene. Controls zinc homeostasis by triggering ZiaA-mediated efflux of excess zinc into the periplasm. This is Transcriptional repressor SmtB homolog (ziaR) from Synechocystis sp. (strain ATCC 27184 / PCC 6803 / Kazusa).